The primary structure comprises 397 residues: Phosphoglycerate kinase (397 aa).

Substrate-binding positions include Asp25–Asn27, Arg41, His64–Arg67, Arg118, and Arg151. Residues Lys202, Glu324, and Gly350 to Thr353 contribute to the ATP site.

This sequence belongs to the phosphoglycerate kinase family. As to quaternary structure, monomer.

Its subcellular location is the cytoplasm. It catalyses the reaction (2R)-3-phosphoglycerate + ATP = (2R)-3-phospho-glyceroyl phosphate + ADP. The protein operates within carbohydrate degradation; glycolysis; pyruvate from D-glyceraldehyde 3-phosphate: step 2/5. In Acidovorax sp. (strain JS42), this protein is Phosphoglycerate kinase.